The chain runs to 279 residues: 3-methyl-2-oxobutanoate hydroxymethyltransferase (279 aa).

Mg(2+) is bound by residues aspartate 43 and aspartate 82. 3-methyl-2-oxobutanoate contacts are provided by residues 43–44, aspartate 82, and lysine 112; that span reads DS. Position 114 (glutamate 114) interacts with Mg(2+). The active-site Proton acceptor is the glutamate 181.

Belongs to the PanB family. Homodecamer; pentamer of dimers. It depends on Mg(2+) as a cofactor.

It is found in the cytoplasm. It carries out the reaction 3-methyl-2-oxobutanoate + (6R)-5,10-methylene-5,6,7,8-tetrahydrofolate + H2O = 2-dehydropantoate + (6S)-5,6,7,8-tetrahydrofolate. Its pathway is cofactor biosynthesis; (R)-pantothenate biosynthesis; (R)-pantoate from 3-methyl-2-oxobutanoate: step 1/2. Its function is as follows. Catalyzes the reversible reaction in which hydroxymethyl group from 5,10-methylenetetrahydrofolate is transferred onto alpha-ketoisovalerate to form ketopantoate. The polypeptide is 3-methyl-2-oxobutanoate hydroxymethyltransferase (Geobacillus kaustophilus (strain HTA426)).